A 234-amino-acid chain; its full sequence is Dienlactone hydrolase 2 (234 aa).

Active-site residues include Cys-143, Asp-167, and His-199.

This sequence belongs to the dienelactone hydrolase family.

It participates in xenobiotic degradation. Its function is as follows. Dienlactone hydrolase; part of the Fusarium detoxification of benzoxazolinone cluster 2 (FDB2) involved in the degradation of benzoxazolinones produced by the host plant. Maize, wheat, and rye produce the 2 benzoxazinone phytoanticipins 2,4-dihy-droxy-7-methoxy-1,4-benzoxazin-3-one (DIMBOA) and 2,4-dihydroxy-1,4-benzoxazin-3-one (DIBOA) that, due to their inherent instability once released, spontaneously degrade to the more stable corresponding benzoxazolinones, 6-methoxy-2-benzoxazolinone (MBOA) and 2-benzoxazolinone (BOA), respectively. The first step in the detoxification of benzoxazolinones involves the hydrolysis of the cyclic ester bond of benzoxazolinones by the FDB1 cluster gamma-lactamase MBL1 to aminophenols. MBL1 is able to convert BOA into 2-aminophenol (2-AP), as well as MBOA into 5-methoxy-2-aminophenol (2-AMP). The FDB2 cluster N-malonyltransferase FDB2/NAT1 then metabolizes aminophenols via N-malonylation to non-toxic malonamic acids. FDB2/NAT1 converts 2-AP into N-(2-hydroxyphenyl) malonamic acid (HPMA) and 2-AMP into N-(2-hydroxy-4-methoxyphenyl) malonamic acid (HMPMA). The duplicated dienlactone hydrolases DLH1 and DLH2 may provide redundant function for hydrolyzing the lactone moiety in the BOA molecule. The roles of the amidases and other enzymes encoded by the 2 FDB clusters have not been identified so far. This chain is Dienlactone hydrolase 2, found in Gibberella moniliformis (strain M3125 / FGSC 7600) (Maize ear and stalk rot fungus).